A 91-amino-acid chain; its full sequence is RNA-binding protein Hfq (91 aa).

Positions D9–F68 constitute a Sm domain. Positions R66–Q91 are disordered. Positions G71 to Q91 are enriched in polar residues.

Belongs to the Hfq family. As to quaternary structure, homohexamer.

RNA chaperone that binds small regulatory RNA (sRNAs) and mRNAs to facilitate mRNA translational regulation in response to envelope stress, environmental stress and changes in metabolite concentrations. Also binds with high specificity to tRNAs. The chain is RNA-binding protein Hfq from Shewanella amazonensis (strain ATCC BAA-1098 / SB2B).